Reading from the N-terminus, the 164-residue chain is Sorting nexin-3 (164 aa).

The region spanning 40 to 163 (EIEVCNPKTH…VRFIQDPTFQ (124 aa)) is the PX domain. The a 1,2-diacyl-sn-glycero-3-phospho-(1D-myo-inositol-3-phosphate) site is built by R83, S85, K114, R120, and R129.

This sequence belongs to the sorting nexin family.

Its subcellular location is the cytoplasm. The protein resides in the golgi apparatus membrane. The protein localises to the prevacuolar compartment membrane. Required for retention of late Golgi membrane proteins. Component of the retrieval machinery that functions by direct interaction with the cytosolic tails of certain TGN membrane proteins during the sorting/budding process at the prevacuolar compartment. Binds phosphatidylinositol 3-phosphate (PtdIns(P3)). The sequence is that of Sorting nexin-3 (SNX3) from Kluyveromyces lactis (strain ATCC 8585 / CBS 2359 / DSM 70799 / NBRC 1267 / NRRL Y-1140 / WM37) (Yeast).